The following is a 434-amino-acid chain: Na(+)/H(+) antiporter NhaA 1 (434 aa).

A run of 11 helical transmembrane segments spans residues 34–54, 73–93, 111–131, 141–161, 171–191, 194–214, 233–253, 278–298, 313–333, 346–366, and 380–400; these read GLLL…PWSA, LTLG…VAGL, ALPV…YVLW, GWAI…AVIS, FLLT…ALFY, ELHL…ALLV, VLVH…GFAV, SAGL…VGGF, VVTG…WLLA, WVDV…SLLI, and HVKV…TGVL.

It belongs to the NhaA Na(+)/H(+) (TC 2.A.33) antiporter family.

Its subcellular location is the cell membrane. It carries out the reaction Na(+)(in) + 2 H(+)(out) = Na(+)(out) + 2 H(+)(in). Functionally, na(+)/H(+) antiporter that extrudes sodium in exchange for external protons. This chain is Na(+)/H(+) antiporter NhaA 1, found in Nocardioides sp. (strain ATCC BAA-499 / JS614).